The primary structure comprises 556 residues: Arginine--tRNA ligase (556 aa).

The short motif at 132 to 142 is the 'HIGH' region element; it reads ANPTGDLHLGH.

Belongs to the class-I aminoacyl-tRNA synthetase family. In terms of assembly, monomer.

The protein resides in the cytoplasm. It carries out the reaction tRNA(Arg) + L-arginine + ATP = L-arginyl-tRNA(Arg) + AMP + diphosphate. The protein is Arginine--tRNA ligase of Listeria monocytogenes serotype 4a (strain HCC23).